A 341-amino-acid chain; its full sequence is UDP-glucuronic acid decarboxylase 5 (341 aa).

The tract at residues 1–21 (MASSDKQTSPKPPPSPSPLRN) is disordered. Position 60–85 (60–85 (DNYFTGSKDNLKKWIGHPRFELIRHD)) interacts with NAD(+). Residue Arg169 participates in substrate binding. Tyr172 serves as the catalytic Proton acceptor. Residue 172–176 (YDEGK) participates in NAD(+) binding. Asn201 lines the substrate pocket. Residue Arg213 coordinates NAD(+). Residues 214–218 (VVSNF), 231–238 (QKPGTQTR), and 298–302 (DPRQR) each bind substrate.

The protein belongs to the NAD(P)-dependent epimerase/dehydratase family. UDP-glucuronic acid decarboxylase subfamily. The cofactor is NAD(+).

The protein resides in the cytoplasm. The enzyme catalyses UDP-alpha-D-glucuronate + H(+) = UDP-alpha-D-xylose + CO2. It functions in the pathway nucleotide-sugar biosynthesis; UDP-alpha-D-xylose biosynthesis; UDP-alpha-D-xylose from UDP-alpha-D-glucuronate: step 1/1. Its function is as follows. Catalyzes the NAD-dependent decarboxylation of UDP-glucuronic acid to UDP-xylose. Necessary for the biosynthesis of the core tetrasaccharide in glycosaminoglycan biosynthesis. In Arabidopsis thaliana (Mouse-ear cress), this protein is UDP-glucuronic acid decarboxylase 5 (UXS5).